The following is a 337-amino-acid chain: Adenine deaminase (337 aa).

Zn(2+) is bound by residues H14, H16, and H194. Residue E197 is the Proton donor of the active site. Residue D275 participates in Zn(2+) binding. D276 is a binding site for substrate.

The protein belongs to the metallo-dependent hydrolases superfamily. Adenosine and AMP deaminases family. Adenine deaminase type 2 subfamily. Zn(2+) serves as cofactor.

The enzyme catalyses adenine + H2O + H(+) = hypoxanthine + NH4(+). Functionally, catalyzes the hydrolytic deamination of adenine to hypoxanthine. Plays an important role in the purine salvage pathway and in nitrogen catabolism. The polypeptide is Adenine deaminase (Vibrio parahaemolyticus serotype O3:K6 (strain RIMD 2210633)).